A 1793-amino-acid chain; its full sequence is Non-reducing polyketide synthase adaA (1793 aa).

The segment at 16–250 is N-terminal acylcarrier protein transacylase domain (SAT); sequence NDDLKALFRG…YSKSLALPVY (235 aa). The 434-residue stretch at 388-821 folds into the Ketosynthase family 3 (KS3) domain; that stretch reads DSKLAIVGMA…GGNTTLVLED (434 aa). Catalysis depends on for beta-ketoacyl synthase activity residues Cys-561, His-696, and His-739. The interval 923-1245 is malonyl-CoA:ACP transacylase (MAT) domain; it reads VFTFTGQGAY…KSLCTLHLAG (323 aa). The segment at 1312 to 1634 is product template (PT) domain; the sequence is TSLIHQVTEE…RLLMDRFFSP (323 aa). The N-terminal hotdog fold stretch occupies residues 1316–1452; sequence HQVTEETVDK…GSIKYPADPT (137 aa). The region spanning 1316–1629 is the PKS/mFAS DH domain; that stretch reads HQVTEETVDK…FRRVPRLLMD (314 aa). His-1348 functions as the Proton acceptor; for dehydratase activity in the catalytic mechanism. The segment at 1482-1629 is C-terminal hotdog fold; that stretch reads KASTLSKPLA…FRRVPRLLMD (148 aa). Residue Asp-1540 is the Proton donor; for dehydratase activity of the active site. Low complexity predominate over residues 1642–1659; the sequence is AAPAPAPAAVPAVKKQPP. The segment at 1642–1714 is disordered; that stretch reads AAPAPAPAAV…TTEQEAPVAD (73 aa). The span at 1660–1681 shows a compositional bias: polar residues; the sequence is TETIQPQAPKTEQKQDQLQLPN. The segment covering 1683–1706 has biased composition (low complexity); sequence ASAAPSTANSSSSPSSSGVATPTT. The 78-residue stretch at 1716-1793 folds into the Carrier domain; it reads SAVTGVAGKC…DLTGWLEQYC (78 aa). Ser-1753 is modified (O-(pantetheine 4'-phosphoryl)serine).

Pantetheine 4'-phosphate is required as a cofactor.

It carries out the reaction holo-[ACP] + 9 malonyl-CoA + acetyl-CoA + 9 H(+) = 3-(2,4-dioxopentyl)-3,6,8,9-tetrahydroxy-1-oxo-1,2,3,4-tetrahydroanthracene-2-carboxyl-[ACP] + 9 CO2 + 10 CoA + 2 H2O. It functions in the pathway secondary metabolite biosynthesis. Functionally, non-reducing polyketide synthase; part of the gene cluster that mediates the biosynthesis of the linear tetracyclic TAN-1612 neuropeptide Y receptor antagonist. The decaketide backbone of TAN-1612 is synthesized by the non-reducing polyketide synthase adaA via condensation of one acetyl-CoA starter unit with 9 malonyl-CoA units. The FAD-dependent monooxygenase adaC then performs hydroxylation at C2 while the polaketide chain is still attached to the NRPKS adaA. The alpha-hydroxylation step at C2 appears to be crucial for the following C18-C1 Claisen cyclization and release of the C9-hydroxyl version of TAN-1612 from the NRPKS adaA, two steps performed by the lactamase-like protein adaB. Finally, the O-methyltransferase adaD performs the C9 O-methylation to complete the biosynthesis of TAN-1612. The protein is Non-reducing polyketide synthase adaA of Aspergillus niger (strain ATCC MYA-4892 / CBS 513.88 / FGSC A1513).